A 962-amino-acid polypeptide reads, in one-letter code: pH-response regulator protein palF/prr-3 (962 aa).

Disordered stretches follow at residues 1–43 (MGPF…DSST), 225–326 (APPK…THPS), 568–675 (TDSN…PDEN), and 689–962 (RLLP…RYER). The span at 237–246 (ISKRAKKKRP) shows a compositional bias: basic residues. Composition is skewed to polar residues over residues 297 to 307 (GFSQAPRSVSH), 314 to 326 (SGDS…THPS), and 581 to 596 (PSLT…SNYV). 2 stretches are compositionally biased toward low complexity: residues 696-722 (PIAA…PDSS) and 738-747 (PTPAATPATA). The segment covering 793–805 (TEDKQELERRRLL) has biased composition (basic and acidic residues). The span at 830–839 (AGPSGSRAGP) shows a compositional bias: low complexity. A compositionally biased stretch (pro residues) spans 840–849 (SAPPPAPPVA). Residues 913-928 (PSSPVLAPASAFFPAS) are compositionally biased toward low complexity. Over residues 929–949 (GSGNVHDSPREQGQQARSDSS) the composition is skewed to polar residues.

The protein belongs to the arrestin family. PalF/RIM8 subfamily.

Functionally, required for the proteolytic cleavage of the transcription factor pacc-1 in response to alkaline ambient pH. In Neurospora crassa (strain ATCC 24698 / 74-OR23-1A / CBS 708.71 / DSM 1257 / FGSC 987), this protein is pH-response regulator protein palF/prr-3 (prr-3).